Here is a 344-residue protein sequence, read N- to C-terminus: tRNA N6-adenosine threonylcarbamoyltransferase (344 aa).

2 residues coordinate Fe cation: His-112 and His-116. Residues 135 to 139 (LVSGG), Asp-168, Gly-181, and Asn-271 each bind substrate. Asp-299 lines the Fe cation pocket.

This sequence belongs to the KAE1 / TsaD family. Fe(2+) serves as cofactor.

It is found in the cytoplasm. It catalyses the reaction L-threonylcarbamoyladenylate + adenosine(37) in tRNA = N(6)-L-threonylcarbamoyladenosine(37) in tRNA + AMP + H(+). Its function is as follows. Required for the formation of a threonylcarbamoyl group on adenosine at position 37 (t(6)A37) in tRNAs that read codons beginning with adenine. Is involved in the transfer of the threonylcarbamoyl moiety of threonylcarbamoyl-AMP (TC-AMP) to the N6 group of A37, together with TsaE and TsaB. TsaD likely plays a direct catalytic role in this reaction. The protein is tRNA N6-adenosine threonylcarbamoyltransferase of Sphingopyxis alaskensis (strain DSM 13593 / LMG 18877 / RB2256) (Sphingomonas alaskensis).